We begin with the raw amino-acid sequence, 353 residues long: Uroporphyrinogen decarboxylase (353 aa).

Substrate is bound by residues 27-31 (RQAGR), Phe-46, Asp-76, Tyr-152, Ser-207, and His-321.

It belongs to the uroporphyrinogen decarboxylase family. In terms of assembly, homodimer.

The protein resides in the cytoplasm. The catalysed reaction is uroporphyrinogen III + 4 H(+) = coproporphyrinogen III + 4 CO2. The protein operates within porphyrin-containing compound metabolism; protoporphyrin-IX biosynthesis; coproporphyrinogen-III from 5-aminolevulinate: step 4/4. Its function is as follows. Catalyzes the decarboxylation of four acetate groups of uroporphyrinogen-III to yield coproporphyrinogen-III. The chain is Uroporphyrinogen decarboxylase from Listeria monocytogenes serovar 1/2a (strain ATCC BAA-679 / EGD-e).